Here is a 751-residue protein sequence, read N- to C-terminus: Photosystem I P700 chlorophyll a apoprotein A1 (751 aa).

The next 8 membrane-spanning stretches (helical) occupy residues 73 to 96 (VFSA…FHGA), 159 to 182 (LYTT…FHYH), 198 to 222 (LNHH…HVSL), 294 to 312 (TAHH…GHMY), 349 to 372 (WHAQ…HHMY), 388 to 414 (LSLF…IFMV), 436 to 458 (AIIS…LYIH), and 533 to 551 (FLVH…LILL). Residues C575 and C584 each contribute to the [4Fe-4S] cluster site. A run of 2 helical transmembrane segments spans residues 591–612 (HVFL…HFSW) and 665–687 (LSAY…MFLF). Residue H676 coordinates chlorophyll a'. Residues M684 and Y692 each contribute to the chlorophyll a site. W693 is a binding site for phylloquinone. The helical transmembrane segment at 725–745 (AVGVAHYLLGGIATTWSFFLA) threads the bilayer.

It belongs to the PsaA/PsaB family. The PsaA/B heterodimer binds the P700 chlorophyll special pair and subsequent electron acceptors. PSI consists of a core antenna complex that captures photons, and an electron transfer chain that converts photonic excitation into a charge separation. The eukaryotic PSI reaction center is composed of at least 11 subunits. The cofactor is P700 is a chlorophyll a/chlorophyll a' dimer, A0 is one or more chlorophyll a, A1 is one or both phylloquinones and FX is a shared 4Fe-4S iron-sulfur center..

The protein localises to the plastid. The protein resides in the chloroplast thylakoid membrane. The catalysed reaction is reduced [plastocyanin] + hnu + oxidized [2Fe-2S]-[ferredoxin] = oxidized [plastocyanin] + reduced [2Fe-2S]-[ferredoxin]. PsaA and PsaB bind P700, the primary electron donor of photosystem I (PSI), as well as the electron acceptors A0, A1 and FX. PSI is a plastocyanin/cytochrome c6-ferredoxin oxidoreductase, converting photonic excitation into a charge separation, which transfers an electron from the donor P700 chlorophyll pair to the spectroscopically characterized acceptors A0, A1, FX, FA and FB in turn. Oxidized P700 is reduced on the lumenal side of the thylakoid membrane by plastocyanin or cytochrome c6. The chain is Photosystem I P700 chlorophyll a apoprotein A1 from Tetradesmus obliquus (Green alga).